The following is a 243-amino-acid chain: DNA repair protein RecO (243 aa).

It belongs to the RecO family.

Its function is as follows. Involved in DNA repair and RecF pathway recombination. The protein is DNA repair protein RecO of Chlamydia trachomatis serovar L2 (strain ATCC VR-902B / DSM 19102 / 434/Bu).